Here is a 254-residue protein sequence, read N- to C-terminus: Receptor expression-enhancing protein 2 (254 aa).

The next 2 helical transmembrane spans lie at 1–21 (MVSW…YPAY) and 35–55 (YVKW…ETLT). The residue at position 152 (Ser152) is a Phosphoserine. The interval 164-254 (ALPLQGPDGR…KKTSAGGDSA (91 aa)) is disordered. Residues 195–204 (SVRSGTNQAD) show a composition bias toward polar residues. The segment covering 205–219 (PRTEISEDDTGDKAP) has biased composition (basic and acidic residues).

The protein belongs to the DP1 family. In terms of assembly, interacts with odorant receptor proteins.

The protein localises to the membrane. Its function is as follows. Required for endoplasmic reticulum (ER) network formation, shaping and remodeling. May enhance the cell surface expression of odorant receptors. This Bos taurus (Bovine) protein is Receptor expression-enhancing protein 2 (REEP2).